A 140-amino-acid chain; its full sequence is ATP synthase epsilon chain (140 aa).

Belongs to the ATPase epsilon chain family. In terms of assembly, F-type ATPases have 2 components, CF(1) - the catalytic core - and CF(0) - the membrane proton channel. CF(1) has five subunits: alpha(3), beta(3), gamma(1), delta(1), epsilon(1). CF(0) has three main subunits: a, b and c.

It is found in the cell inner membrane. Produces ATP from ADP in the presence of a proton gradient across the membrane. In Pseudoalteromonas translucida (strain TAC 125), this protein is ATP synthase epsilon chain.